The following is a 679-amino-acid chain: Glycine--tRNA ligase beta subunit (679 aa).

Belongs to the class-II aminoacyl-tRNA synthetase family. As to quaternary structure, tetramer of two alpha and two beta subunits.

Its subcellular location is the cytoplasm. The catalysed reaction is tRNA(Gly) + glycine + ATP = glycyl-tRNA(Gly) + AMP + diphosphate. The polypeptide is Glycine--tRNA ligase beta subunit (Streptococcus pyogenes serotype M3 (strain ATCC BAA-595 / MGAS315)).